A 278-amino-acid polypeptide reads, in one-letter code: Inner membrane mitoribosome receptor MBA1, mitochondrial (278 aa).

The transit peptide at 1–33 (MSVLRSTCLFFPPRSLLISFNKRRLFSTSRLIL) directs the protein to the mitochondrion.

As to quaternary structure, interacts with OXA1 and MDM38. Binds to mitoribosomes in order to recruit them to the mitochondrial inner membrane.

It is found in the mitochondrion inner membrane. Functionally, mitochondrial inner membrane-associated mitoribosome receptor that spatially aligns the mitoribosome exit tunnel with the membrane insertion machinery and allows cotranslational protein membrane insertion. This is Inner membrane mitoribosome receptor MBA1, mitochondrial from Saccharomyces cerevisiae (strain ATCC 204508 / S288c) (Baker's yeast).